We begin with the raw amino-acid sequence, 466 residues long: ATP synthase subunit beta (466 aa).

153-160 (GGAGVGKT) contributes to the ATP binding site.

The protein belongs to the ATPase alpha/beta chains family. In terms of assembly, F-type ATPases have 2 components, CF(1) - the catalytic core - and CF(0) - the membrane proton channel. CF(1) has five subunits: alpha(3), beta(3), gamma(1), delta(1), epsilon(1). CF(0) has three main subunits: a(1), b(2) and c(9-12). The alpha and beta chains form an alternating ring which encloses part of the gamma chain. CF(1) is attached to CF(0) by a central stalk formed by the gamma and epsilon chains, while a peripheral stalk is formed by the delta and b chains.

The protein localises to the cell membrane. It catalyses the reaction ATP + H2O + 4 H(+)(in) = ADP + phosphate + 5 H(+)(out). Functionally, produces ATP from ADP in the presence of a proton gradient across the membrane. The catalytic sites are hosted primarily by the beta subunits. This Leuconostoc mesenteroides subsp. mesenteroides (strain ATCC 8293 / DSM 20343 / BCRC 11652 / CCM 1803 / JCM 6124 / NCDO 523 / NBRC 100496 / NCIMB 8023 / NCTC 12954 / NRRL B-1118 / 37Y) protein is ATP synthase subunit beta.